The chain runs to 306 residues: Pantothenate kinase (306 aa).

Position 91 to 98 (91 to 98) interacts with ATP; that stretch reads GSVAVGKS.

Belongs to the prokaryotic pantothenate kinase family.

Its subcellular location is the cytoplasm. It catalyses the reaction (R)-pantothenate + ATP = (R)-4'-phosphopantothenate + ADP + H(+). The protein operates within cofactor biosynthesis; coenzyme A biosynthesis; CoA from (R)-pantothenate: step 1/5. The polypeptide is Pantothenate kinase (Streptococcus suis (strain 05ZYH33)).